A 733-amino-acid polypeptide reads, in one-letter code: Sulfate transporter (733 aa).

The segment covering 1 to 18 has biased composition (basic and acidic residues); sequence MSLKNEEQNDLSPKDSVK. The disordered stretch occupies residues 1–37; it reads MSLKNEEQNDLSPKDSVKGNDQYRAPSGIHLEREEES. 2 positions are modified to phosphoserine: Ser12 and Ser16. 2 helical membrane passes run 113 to 133 and 138 to 158; these read VMSG…YSLL and PIYG…LGTS. Asn194 carries an N-linked (GlcNAc...) asparagine glycan. 6 consecutive transmembrane segments (helical) span residues 214–234, 237–257, 379–399, 415–435, 453–473, and 519–539; these read IIVG…MGFF, GFVS…GASF, IDAI…SEMF, AIGF…SAAL, VMTA…FFSL, and LIST…CVIL. One can recognise an STAS domain in the interval 563–714; sequence AYKNLQAKSG…SVYEAMTFAE (152 aa).

The protein belongs to the SLC26A/SulP transporter (TC 2.A.53) family. In terms of processing, N-glycosylated.

It localises to the cell membrane. Its subcellular location is the apical cell membrane. The catalysed reaction is oxalate(in) + sulfate(out) = oxalate(out) + sulfate(in). The enzyme catalyses sulfate(out) + 2 chloride(in) = sulfate(in) + 2 chloride(out). It carries out the reaction oxalate(out) + 2 chloride(in) = oxalate(in) + 2 chloride(out). It catalyses the reaction bromide(in) + chloride(out) = bromide(out) + chloride(in). The catalysed reaction is nitrate(in) + chloride(out) = nitrate(out) + chloride(in). The enzyme catalyses iodide(in) + chloride(out) = iodide(out) + chloride(in). Its function is as follows. Sulfate transporter which mediates sulfate uptake into chondrocytes in order to maintain adequate sulfation of proteoglycans which is needed for cartilage development. Mediates electroneutral anion exchange of sulfate ions for oxalate ions, sulfate and oxalate ions for chloride and/or hydroxyl ions and chloride ions for bromide, iodide and nitrate ions. The coupling of sulfate transport to both hydroxyl and chloride ions likely serves to ensure transport at both acidic pH when most sulfate uptake is mediated by sulfate-hydroxide exchange and alkaline pH when most sulfate uptake is mediated by sulfate-chloride exchange. Essential for chondrocyte proliferation, differentiation and cell size expansion. The protein is Sulfate transporter (SLC26A2) of Bubalus bubalis (Domestic water buffalo).